Reading from the N-terminus, the 524-residue chain is MSQRSSQHIVGIHYAVGPKIGEGSFGVIFEGENILHSCQAQTGSKRDSSIIMANEPVAIKFEPRHSDAPQLRDEFRAYRILNGCVGIPHAYYFGQEGMHNILIIDLLGPSLEDLFEWCGRKFSVKTTCMVAKQMIDRVRAIHDHDLIYRDIKPDNFLISQYQRISPEGKVIKSCASSSNNDPNLIYMVDFGMAKQYRDPRTKQHIPYRERKSLSGTARYMSINTHFGREQSRRDDLESLGHVFFYFLRGSLPWQGLKAPNNKLKYEKIGMTKQKLNPDDLLLNNAIPYQFATYLKYARSLKFDEDPDYDYLISLMDDALRLNDLKDDGHYDWMDLNGGKGWNIKINRRANLHGYGNPNPRVNGNTARNNVNTNSKTRNTTPVATPKQQAQNSYNKDNSKSRISSNPQSFTKQQHVLKKIEPNSKYIPETHSNLQRPIKSQSQTYDSISHTQNSPFVPYSSSKANPKRSNNEHNLPNHYTNLANKNINYQSQRNYEQENDAYSDDENDTFCSKIYKYCCCCFCCC.

The Protein kinase domain maps to 14-319; the sequence is YAVGPKIGEG…YLISLMDDAL (306 aa). Residues 20–28 and Lys60 each bind ATP; that span reads IGEGSFGVI. The active-site Proton acceptor is Asp150. 2 disordered regions span residues 352 to 414 and 427 to 474; these read HGYG…KQQH and PETH…EHNL. Residues 360 to 373 are compositionally biased toward low complexity; the sequence is RVNGNTARNNVNTN. 2 stretches are compositionally biased toward polar residues: residues 374-413 and 429-474; these read SKTR…TKQQ and THSN…EHNL. The short motif at 444–447 is the YXXZ targeting signal element; the sequence is YDSI. Residues Cys517, Cys518, Cys519, Cys520, Cys522, Cys523, and Cys524 are each lipidated (S-palmitoyl cysteine).

The protein belongs to the protein kinase superfamily. CK1 Ser/Thr protein kinase family. Casein kinase I subfamily.

The protein resides in the cell membrane. Its subcellular location is the nucleus membrane. It is found in the vacuole membrane. It catalyses the reaction L-seryl-[protein] + ATP = O-phospho-L-seryl-[protein] + ADP + H(+). It carries out the reaction L-threonyl-[protein] + ATP = O-phospho-L-threonyl-[protein] + ADP + H(+). Functionally, casein kinases are operationally defined by their preferential utilization of acidic proteins such as caseins as substrates. Phosphorylates MON1, inhibiting the guanine nucleotide exchange factor activity of the MON1-CCZ1 complex, possibly by preventing its recruitment to membranes by small GTPase RAB5 homologs. In Saccharomyces cerevisiae (strain ATCC 204508 / S288c) (Baker's yeast), this protein is Casein kinase I homolog 3 (YCK3).